Here is a 184-residue protein sequence, read N- to C-terminus: Large ribosomal subunit protein uL6 (184 aa).

Belongs to the universal ribosomal protein uL6 family. Part of the 50S ribosomal subunit.

Functionally, this protein binds to the 23S rRNA, and is important in its secondary structure. It is located near the subunit interface in the base of the L7/L12 stalk, and near the tRNA binding site of the peptidyltransferase center. This is Large ribosomal subunit protein uL6 from Onion yellows phytoplasma (strain OY-M).